The chain runs to 144 residues: MAKLSGSIDVPLPPEEAWMHASDLTRYREWLTIHKVWRSKLPEVLEKGTVVESYVEVKGMPNRIKWTIVRYKPPEGMTLNGDGVGGVKVKLIAKVAPKEHGSVVSFDVHLGGPALLGPIGMIVAAALRADIRESLQNFVTVFAG.

Functionally, toxic component of a type II toxin-antitoxin (TA) system. Its toxic effect is neutralized by coexpression with cognate antitoxin MT0933. In Mycobacterium tuberculosis (strain CDC 1551 / Oshkosh), this protein is Toxin MT0934.